The following is a 100-amino-acid chain: Urease subunit gamma (100 aa).

This sequence belongs to the urease gamma subunit family. Heterotrimer of UreA (gamma), UreB (beta) and UreC (alpha) subunits. Three heterotrimers associate to form the active enzyme.

The protein localises to the cytoplasm. It carries out the reaction urea + 2 H2O + H(+) = hydrogencarbonate + 2 NH4(+). It participates in nitrogen metabolism; urea degradation; CO(2) and NH(3) from urea (urease route): step 1/1. This is Urease subunit gamma from Bordetella bronchiseptica (strain ATCC BAA-588 / NCTC 13252 / RB50) (Alcaligenes bronchisepticus).